The chain runs to 181 residues: Peptidyl-tRNA hydrolase (181 aa).

Tyr-14 provides a ligand contact to tRNA. His-19 serves as the catalytic Proton acceptor. TRNA-binding residues include Tyr-62, Asn-64, and Asn-108.

Belongs to the PTH family. In terms of assembly, monomer.

Its subcellular location is the cytoplasm. The enzyme catalyses an N-acyl-L-alpha-aminoacyl-tRNA + H2O = an N-acyl-L-amino acid + a tRNA + H(+). In terms of biological role, hydrolyzes ribosome-free peptidyl-tRNAs (with 1 or more amino acids incorporated), which drop off the ribosome during protein synthesis, or as a result of ribosome stalling. Catalyzes the release of premature peptidyl moieties from peptidyl-tRNA molecules trapped in stalled 50S ribosomal subunits, and thus maintains levels of free tRNAs and 50S ribosomes. This chain is Peptidyl-tRNA hydrolase, found in Campylobacter jejuni subsp. jejuni serotype O:23/36 (strain 81-176).